A 439-amino-acid polypeptide reads, in one-letter code: Ribosomal protein uS12 methylthiotransferase RimO (439 aa).

The region spanning 3 to 115 (NKLHIVSLGC…IDELLVEKKS (113 aa)) is the MTTase N-terminal domain. Cys-12, Cys-46, Cys-78, Cys-146, Cys-150, and Cys-153 together coordinate [4Fe-4S] cluster. In terms of domain architecture, Radical SAM core spans 132–361 (TGSTYHAYIK…GKIAADVMQA (230 aa)).

This sequence belongs to the methylthiotransferase family. RimO subfamily. It depends on [4Fe-4S] cluster as a cofactor.

The protein localises to the cytoplasm. It catalyses the reaction L-aspartate(89)-[ribosomal protein uS12]-hydrogen + (sulfur carrier)-SH + AH2 + 2 S-adenosyl-L-methionine = 3-methylsulfanyl-L-aspartate(89)-[ribosomal protein uS12]-hydrogen + (sulfur carrier)-H + 5'-deoxyadenosine + L-methionine + A + S-adenosyl-L-homocysteine + 2 H(+). In terms of biological role, catalyzes the methylthiolation of an aspartic acid residue of ribosomal protein uS12. The chain is Ribosomal protein uS12 methylthiotransferase RimO from Sulfurimonas denitrificans (strain ATCC 33889 / DSM 1251) (Thiomicrospira denitrificans (strain ATCC 33889 / DSM 1251)).